We begin with the raw amino-acid sequence, 206 residues long: Phosphatidyl-N-methylethanolamine N-methyltransferase (206 aa).

Residues 1–20 are Lumenal-facing; the sequence is MKESVQEIIQQLIHSVDLQS. Residues 21 to 41 constitute an intramembrane region (helical); sequence SKFQLAIVCTMFNPIFWNIVA. The Lumenal segment spans residues 42–53; that stretch reads RMEYHKHSLTKM. The helical transmembrane segment at 54 to 74 threads the bilayer; it reads CGGARKGCYMLAATIFSLGIV. Topologically, residues 75–101 are cytoplasmic; the sequence is RDMVYESALREQPTCSLITGENWTKLG. A helical membrane pass occupies residues 102–122; the sequence is VALFGLGQVLVLSSMYKLGIT. Position 106–108 (106–108) interacts with S-adenosyl-L-methionine; sequence GLG. Residues 123 to 165 are Lumenal-facing; sequence GTYLGDYFGILMDERVTGFPFNVSNNPMYQGSTLSFLGIALYK. Residues 166–186 form a helical membrane-spanning segment; it reads GKPAGLVVSAVVYFMYKIALR. Topologically, residues 187–206 are cytoplasmic; it reads WEEPFTAMIYANRDKAKKNM. 188-189 lines the S-adenosyl-L-methionine pocket; sequence EE.

This sequence belongs to the class VI-like SAM-binding methyltransferase superfamily. PEMT/PEM2 methyltransferase family.

The protein localises to the endoplasmic reticulum membrane. It is found in the mitochondrion membrane. It catalyses the reaction a 1,2-diacyl-sn-glycero-3-phosphoethanolamine + S-adenosyl-L-methionine = a 1,2-diacyl-sn-glycero-3-phospho-N-methylethanolamine + S-adenosyl-L-homocysteine + H(+). The catalysed reaction is a 1,2-diacyl-sn-glycero-3-phospho-N-methylethanolamine + S-adenosyl-L-methionine = a 1,2-diacyl-sn-glycero-3-phospho-N,N-dimethylethanolamine + S-adenosyl-L-homocysteine + H(+). The enzyme catalyses a 1,2-diacyl-sn-glycero-3-phospho-N,N-dimethylethanolamine + S-adenosyl-L-methionine = a 1,2-diacyl-sn-glycero-3-phosphocholine + S-adenosyl-L-homocysteine + H(+). It functions in the pathway phospholipid metabolism; phosphatidylcholine biosynthesis. Catalyzes the second two steps of the methylation pathway of phosphatidylcholine biosynthesis, the SAM-dependent methylation of phosphatidylmonomethylethanolamine (PMME) to phosphatidyldimethylethanolamine (PDME) and of PDME to phosphatidylcholine (PC). Can also catalyze the first methylation reaction of PE to PMME in the absence of PE methyltransferase CHO2. In Saccharomyces cerevisiae (strain ATCC 204508 / S288c) (Baker's yeast), this protein is Phosphatidyl-N-methylethanolamine N-methyltransferase.